A 196-amino-acid chain; its full sequence is MGLLDGEAWEKENPPVQATGCIACLEKDDRYPHTCNKGANDMTEREQEMIIKLIDNNEGRPDDLNGCGILCSNVPCHLCPANNDQKITLGEIRAMDPRKPHLNKPEVTPTDDQPSAETIEGVTKPSHYMLFDDIEAIEVIARSMTVEQFKGYCFGNILKYRLRAGKKSELAYLEKDLAKADFYKELFEKHKDKCYA.

Residues 97–118 (PRKPHLNKPEVTPTDDQPSAET) are disordered.

In terms of assembly, dodecamer.

The enzyme catalyses dGMP + ATP = dGDP + ADP. The catalysed reaction is dTMP + ATP = dTDP + ADP. Its function is as follows. Nucleotide kinase that catalyzes the phosphorylation of dGMP and dTMP to dGDP and dTDP. A double mutation in this protein and the RecBCD inhibitor gp5.9 protein allow phage to overcome the retron Ec48 bacteriophage defense system. This protein alone when overexpressed in E.coli does not cause growth arrest; Y128C may be a silent mutation. The chain is Nucleotide kinase gp1.7 from Escherichia coli (Bacteriophage T7).